Reading from the N-terminus, the 208-residue chain is Putative adhesin P1-like protein MPN_468 (208 aa).

2 disordered regions span residues 29 to 49 (TNGSPAGNTSSTTQSNDVAPT) and 97 to 172 (DSKT…NLTP). Low complexity predominate over residues 100–132 (TQNNTTTNENHTKFASATGSGQQQGSTTTTSAG). Residues 145 to 158 (SGNSISVQEATSGD) show a composition bias toward polar residues. Residues 159-172 (NLTNYTNLPPNLTP) are compositionally biased toward low complexity.

Belongs to the adhesin P1 family.

The chain is Putative adhesin P1-like protein MPN_468 from Mycoplasma pneumoniae (strain ATCC 29342 / M129 / Subtype 1) (Mycoplasmoides pneumoniae).